Here is a 1028-residue protein sequence, read N- to C-terminus: Protein SMAX1-LIKE 5 (1028 aa).

The Clp R domain maps to 8–199 (IQQTLTTEAA…CVEDCSVSSV (192 aa)). Repeat stretches follow at residues 12–102 (LTTE…LNRL) and 116–199 (LANA…VSSV). Residues 871–875 (LDLNI) carry the EAR motif.

It belongs to the ClpA/ClpB family. In terms of assembly, interacts probably with TPL/TPR in an EAR-motif dependent manner. Detected in roots, seedlings and axillary branches.

May function in a transcriptional corepressor complex. This Arabidopsis thaliana (Mouse-ear cress) protein is Protein SMAX1-LIKE 5.